We begin with the raw amino-acid sequence, 148 residues long: Lysozyme-like protein 6 (148 aa).

Residues 1-19 form the signal peptide; it reads MTSPLLISLASCLVAVNQA. Positions 20 to 148 constitute a C-type lysozyme domain; it reads SLIGRCDLAK…SYWMTGCHLA (129 aa). 4 disulfides stabilise this stretch: Cys-25/Cys-145, Cys-49/Cys-133, Cys-83/Cys-98, and Cys-94/Cys-112. Residues Glu-54 and Asp-71 contribute to the active site.

The protein belongs to the glycosyl hydrolase 22 family. Monomer.

It localises to the secreted. The protein localises to the cell surface. Its subcellular location is the cell projection. It is found in the cilium. The protein resides in the flagellum. The enzyme catalyses Hydrolysis of (1-&gt;4)-beta-linkages between N-acetylmuramic acid and N-acetyl-D-glucosamine residues in a peptidoglycan and between N-acetyl-D-glucosamine residues in chitodextrins.. In terms of biological role, may be involved sperm-egg plasma membrane adhesion and fusion during fertilization. Exhibits bacteriolytic activity in vitro against Micrococcus luteus and Staphylococcus aureus. Shows weak bacteriolytic activity against Gram-positive bacteria at physiological pH. Bacteriolytic activity is pH-dependent, with a maximum at around pH 5.6. The chain is Lysozyme-like protein 6 (LYZL6) from Bos taurus (Bovine).